We begin with the raw amino-acid sequence, 113 residues long: Hydrogenase maturation factor HypA (113 aa).

Residue His2 participates in Ni(2+) binding. Positions 73, 76, 89, and 92 each coordinate Zn(2+).

This sequence belongs to the HypA/HybF family.

Involved in the maturation of [NiFe] hydrogenases. Required for nickel insertion into the metal center of the hydrogenase. The sequence is that of Hydrogenase maturation factor HypA from Chlorobaculum parvum (strain DSM 263 / NCIMB 8327) (Chlorobium vibrioforme subsp. thiosulfatophilum).